Reading from the N-terminus, the 302-residue chain is tRNA pseudouridine synthase B (302 aa).

Asp38 (nucleophile) is an active-site residue.

The protein belongs to the pseudouridine synthase TruB family. Type 1 subfamily.

It catalyses the reaction uridine(55) in tRNA = pseudouridine(55) in tRNA. Its function is as follows. Responsible for synthesis of pseudouridine from uracil-55 in the psi GC loop of transfer RNAs. The sequence is that of tRNA pseudouridine synthase B from Ligilactobacillus salivarius (strain UCC118) (Lactobacillus salivarius).